We begin with the raw amino-acid sequence, 192 residues long: uncharacterized protein (192 aa).

Residues 29-160 (HRQAAVLIPI…PLDIYRRGDS (132 aa)) enclose the Nudix hydrolase domain. The Nudix box signature appears at 67-89 (GAVDDTDASVIAAALREAEEEVA). Mg(2+) contacts are provided by Glu-83 and Glu-87.

It belongs to the Nudix hydrolase family. PCD1 subfamily. It depends on Mn(2+) as a cofactor. Mg(2+) serves as cofactor.

Probably mediates the hydrolysis of some nucleoside diphosphate derivatives. This is an uncharacterized protein from Shigella sonnei (strain Ss046).